The sequence spans 359 residues: MGDWSFLGEFLEEVHKHSTVIGKVWLTVLFIFRMLVLGTAAESSWGDEQADFLCDTMQPGCENVCYDQAFPISHIRYWVLQVIFVSTPSLVYLGHAVHMVRVQEKRKLLREAERAKEARAAGSYEYPVAEKTELSCWEEVNGRIALQGSLLNTYVCSILIRTTMEVAFIVGQYLLYGVFLDTLHVCRRSPCPHPVNCYVSRPTEKNVFIVFMLAVAGLSLFLSLAELYHLGWKKIRQRYVKSQPGVGECQLPGPSAGRVQSCTPPPDFNQCLENGPGGKFFSPFSNKMASQQNTDNLSTEQVRSQEQIQREGFIHIRYAQKPEVPNEGSPGPSLPHGYQSDKRRLSKASSKARSDDLSV.

Residues 1-19 (MGDWSFLGEFLEEVHKHST) are Cytoplasmic-facing. The helical transmembrane segment at 20 to 40 (VIGKVWLTVLFIFRMLVLGTA) threads the bilayer. Over 41 to 76 (AESSWGDEQADFLCDTMQPGCENVCYDQAFPISHIR) the chain is Extracellular. A helical membrane pass occupies residues 77-97 (YWVLQVIFVSTPSLVYLGHAV). Topologically, residues 98–165 (HMVRVQEKRK…CSILIRTTME (68 aa)) are cytoplasmic. Residues 166-186 (VAFIVGQYLLYGVFLDTLHVC) form a helical membrane-spanning segment. At 187–206 (RRSPCPHPVNCYVSRPTEKN) the chain is on the extracellular side. The helical transmembrane segment at 207–227 (VFIVFMLAVAGLSLFLSLAEL) threads the bilayer. At 228–359 (YHLGWKKIRQ…SKARSDDLSV (132 aa)) the chain is on the cytoplasmic side. Disordered stretches follow at residues 285–305 (SNKM…VRSQ) and 317–359 (RYAQ…DLSV). Ser-354 and Ser-358 each carry phosphoserine.

This sequence belongs to the connexin family. Alpha-type (group II) subfamily. In terms of assembly, a connexon is composed of a hexamer of connexins.

It is found in the cell membrane. It localises to the cell junction. The protein resides in the gap junction. Its function is as follows. One gap junction consists of a cluster of closely packed pairs of transmembrane channels, the connexons, through which materials of low MW diffuse from one cell to a neighboring cell. The sequence is that of Gap junction alpha-5 protein (GJA5) from Bos taurus (Bovine).